A 407-amino-acid polypeptide reads, in one-letter code: MRQLLPGDTVWRNIRLATMDPQRQAPYGLVDNQALIVREGHICDIVPETQLPVSGDNIHDMQGRLVTPGLIDCHTHLVFAGNRAAEWEQRLNGASYQHISAQGGGINATVSATRACAEETLYLLARERMMRLASEGVTLLEIKSGYGLELATEEKLLRVAAKLAAENAIDISPTLLAAHATPAEYRDDPDGYITLVCETMIPQLWQKGLFDAVDLFCESVGFNVAQSERVLQTAKALGIPVKGHVEQLSLLGGAQLVSRYQGLSADHIEYLDEAGVAAMRDGGTVGVLLPGAFYFLRETQRPPVELLRRYQVPVAVASDFNPGTSPFCSLHLAMNMACVQFGLTSEEAWAGVTRHAARALGRQATHGQLRADYRADFVVWDAEQPVEVVYEPGRNPLYQRVYRGQIS.

Fe(3+) contacts are provided by His74 and His76. Positions 74 and 76 each coordinate Zn(2+). Residues Arg83, Tyr146, and His179 each coordinate 4-imidazolone-5-propanoate. Tyr146 contributes to the N-formimidoyl-L-glutamate binding site. His244 is a Fe(3+) binding site. Residue His244 participates in Zn(2+) binding. 4-imidazolone-5-propanoate is bound at residue Gln247. Asp319 contributes to the Fe(3+) binding site. Asp319 contributes to the Zn(2+) binding site. Residues Asn321 and Gly323 each contribute to the N-formimidoyl-L-glutamate site. Thr324 contacts 4-imidazolone-5-propanoate.

It belongs to the metallo-dependent hydrolases superfamily. HutI family. Zn(2+) is required as a cofactor. It depends on Fe(3+) as a cofactor.

It localises to the cytoplasm. It catalyses the reaction 4-imidazolone-5-propanoate + H2O = N-formimidoyl-L-glutamate. It participates in amino-acid degradation; L-histidine degradation into L-glutamate; N-formimidoyl-L-glutamate from L-histidine: step 3/3. Its function is as follows. Catalyzes the hydrolytic cleavage of the carbon-nitrogen bond in imidazolone-5-propanoate to yield N-formimidoyl-L-glutamate. It is the third step in the universal histidine degradation pathway. The chain is Imidazolonepropionase from Salmonella enteritidis PT4 (strain P125109).